The chain runs to 261 residues: Triosephosphate isomerase (261 aa).

Residue 10 to 12 (NWK) participates in substrate binding. The active-site Electrophile is histidine 100. Residue glutamate 172 is the Proton acceptor of the active site. Residues glycine 178, serine 218, and 239–240 (GG) each bind substrate.

Belongs to the triosephosphate isomerase family. Homodimer.

The protein resides in the cytoplasm. The enzyme catalyses D-glyceraldehyde 3-phosphate = dihydroxyacetone phosphate. It functions in the pathway carbohydrate biosynthesis; gluconeogenesis. It participates in carbohydrate degradation; glycolysis; D-glyceraldehyde 3-phosphate from glycerone phosphate: step 1/1. Functionally, involved in the gluconeogenesis. Catalyzes stereospecifically the conversion of dihydroxyacetone phosphate (DHAP) to D-glyceraldehyde-3-phosphate (G3P). The protein is Triosephosphate isomerase of Mycobacterium marinum (strain ATCC BAA-535 / M).